We begin with the raw amino-acid sequence, 355 residues long: dTDP-D-glucose 4,6-dehydratase (355 aa).

T142 contacts substrate. D143 functions as the Proton donor in the catalytic mechanism. Residues E144 and Y166 each act as proton acceptor in the active site.

Belongs to the NAD(P)-dependent epimerase/dehydratase family. dTDP-glucose dehydratase subfamily. The cofactor is NAD(+).

The catalysed reaction is dTDP-alpha-D-glucose = dTDP-4-dehydro-6-deoxy-alpha-D-glucose + H2O. This chain is dTDP-D-glucose 4,6-dehydratase (TGDS), found in Bos taurus (Bovine).